Here is a 782-residue protein sequence, read N- to C-terminus: MSGEDGPAAGPGAAAAAARERRREQLRQWGARAGAEPGPGERRARTVRFERAAEFLAACAGGDLDEARLMLRAADPGPGAELDPAAPPPARAVLDSTNADGISALHQACIDENLEVVRFLVEQGATVNQADNEGWTPLHVAASCGYLDIARYLLSHGANIAAVNSDGDLPLDLAESDAMEGLLKAEIARRGVDVEAAKRAEEELLLHDTRCWLNGGAMPEARHPRTGASALHVAAAKGYIEVMRLLLQAGYDPELRDGDGWTPLHAAAHWGVEDACRLLAEHGGGMDSLTHAGQRPCDLADEEVLSLLEELARKQEDLRNQKEASQSRGQEPQAPSSSKHRRSSVCRLSSREKISLQDLSKERRPGGAGGPPIQDEDEGEEGPTEPPPAEPRTLNGVSSPPHPSPKSPVQLEEAPFSRRFGLLKTGSSGALGPPERRTAEGAPGAGLQRSASSSWLEGTSTQAKELRLARITPTPSPKLPEPSVLSEVTKPPPCLENSSPPSRIPEPESPAKPNVPTASTAPPADSRDRRRSYQMPVRDEESESQRKARSRLMRQSRRSTQGVTLTDLKEAEKAAGKAPESEKPAQSLDPSRRPRVPGVENSDSPAQRAEAPDGQGPGPQAAREHRKVGKEWRGPAEGEEAEPADRSQESSTLEGGPSARRQRWQRDLNPEPEPESEEPDGGFRTLYAELRRENERLREALTETTLRLAQLKVELERATQRQERFAERPALLELERFERRALERKAAELEEELKALSDLRADNQRLKDENAALIRVISKLSK.

Over residues 1-17 (MSGEDGPAAGPGAAAAA) the composition is skewed to low complexity. Positions 1–43 (MSGEDGPAAGPGAAAAAARERRREQLRQWGARAGAEPGPGERR) are disordered. Serine 2 carries the post-translational modification N-acetylserine. 4 ANK repeats span residues 100–129 (DGIS…TVNQ), 133–162 (EGWT…NIAA), 226–255 (TGAS…DPEL), and 259–288 (DGWT…GMDS). The stretch at 297-329 (CDLADEEVLSLLEELARKQEDLRNQKEASQSRG) forms a coiled coil. Residues 316–686 (EDLRNQKEAS…EEPDGGFRTL (371 aa)) form a disordered region. Positions 323-337 (EASQSRGQEPQAPSS) are enriched in polar residues. Basic and acidic residues predominate over residues 349–365 (SSREKISLQDLSKERRP). Residues 374–383 (QDEDEGEEGP) are compositionally biased toward acidic residues. 5 positions are modified to phosphoserine: serine 399, serine 407, serine 427, serine 452, and serine 509. Positions 449-463 (RSASSSWLEGTSTQA) are enriched in polar residues. The span at 537-546 (VRDEESESQR) shows a compositional bias: basic and acidic residues. A compositionally biased stretch (basic residues) spans 547 to 557 (KARSRLMRQSR). At threonine 560 the chain carries Phosphothreonine; by CDC42BP and ROCK2. Over residues 567-583 (DLKEAEKAAGKAPESEK) the composition is skewed to basic and acidic residues. Residues serine 604 and serine 647 each carry the phosphoserine modification. Residues 670–680 (PEPEPESEEPD) show a composition bias toward acidic residues. Residues 681 to 782 (GGFRTLYAEL…LIRVISKLSK (102 aa)) are a coiled coil.

As to quaternary structure, PP1 comprises a catalytic subunit, PPP1CA, PPP1CB or PPP1CC, and one or several targeting or regulatory subunits. PPP1R12C mediates binding to myosin. Interacts via its N-terminus with PPP1CB. Interacts with IL16. Interacts with the coiled-coil domain of MPRIP. Interacts with NOD2. Phosphorylation at Thr-560 is essential for its interaction with PPP1CB. In terms of tissue distribution, ubiquitously expressed. Highly expressed in heart.

It localises to the cytoplasm. The protein resides in the cytoskeleton. The protein localises to the stress fiber. Regulates myosin phosphatase activity. This Homo sapiens (Human) protein is Protein phosphatase 1 regulatory subunit 12C.